Here is a 138-residue protein sequence, read N- to C-terminus: uncharacterized protein (138 aa).

A disordered region spans residues 84–104 (PPKKTSPATSSSLKPRPGPRG). The span at 85–98 (PKKTSPATSSSLKP) shows a compositional bias: low complexity.

It to M.pneumoniae MPN_413 and MPN_463.

This is an uncharacterized protein from Mycoplasma pneumoniae (strain ATCC 29342 / M129 / Subtype 1) (Mycoplasmoides pneumoniae).